A 181-amino-acid chain; its full sequence is GTP cyclohydrolase 1 2 (181 aa).

The protein belongs to the GTP cyclohydrolase I family. In terms of assembly, homomer.

The catalysed reaction is GTP + H2O = 7,8-dihydroneopterin 3'-triphosphate + formate + H(+). It functions in the pathway cofactor biosynthesis; 7,8-dihydroneopterin triphosphate biosynthesis; 7,8-dihydroneopterin triphosphate from GTP: step 1/1. In Pseudomonas aeruginosa (strain ATCC 15692 / DSM 22644 / CIP 104116 / JCM 14847 / LMG 12228 / 1C / PRS 101 / PAO1), this protein is GTP cyclohydrolase 1 2 (folE2).